We begin with the raw amino-acid sequence, 110 residues long: Phosphoribosyl-AMP cyclohydrolase (110 aa).

D80 is a Mg(2+) binding site. C81 contacts Zn(2+). Residues D82 and D84 each contribute to the Mg(2+) site. 2 residues coordinate Zn(2+): C97 and C104.

It belongs to the PRA-CH family. Homodimer. Requires Mg(2+) as cofactor. The cofactor is Zn(2+).

The protein localises to the cytoplasm. The enzyme catalyses 1-(5-phospho-beta-D-ribosyl)-5'-AMP + H2O = 1-(5-phospho-beta-D-ribosyl)-5-[(5-phospho-beta-D-ribosylamino)methylideneamino]imidazole-4-carboxamide. It functions in the pathway amino-acid biosynthesis; L-histidine biosynthesis; L-histidine from 5-phospho-alpha-D-ribose 1-diphosphate: step 3/9. Its function is as follows. Catalyzes the hydrolysis of the adenine ring of phosphoribosyl-AMP. This is Phosphoribosyl-AMP cyclohydrolase from Clostridium botulinum (strain Okra / Type B1).